We begin with the raw amino-acid sequence, 1133 residues long: Myb-binding protein 1A (1133 aa).

Disordered stretches follow at residues 1 to 62 (MKSK…ENTA), 718 to 764 (PLSK…DAES), 924 to 943 (GEEH…SRQA), and 1111 to 1133 (KKVA…EEST). Composition is skewed to basic and acidic residues over residues 20-35 (KAKE…KSEA) and 50-60 (EKPAETEEKEN). Acidic residues-rich tracts occupy residues 725 to 735 (GEEESDDELDK) and 744 to 762 (DDSE…EDDA).

It belongs to the MYBBP1A family. In terms of assembly, interacts with nclb.

The protein resides in the cytoplasm. The protein localises to the nucleus. It is found in the nucleolus. Functionally, has a role in rRNA biogenesis, cell proliferation and tissue growth by contributing to the localization of nclb to the nucleolus. The chain is Myb-binding protein 1A from Drosophila melanogaster (Fruit fly).